The sequence spans 557 residues: Probable serine/threonine-protein kinase WNK7 (557 aa).

The region spanning 28–285 (IRYKEVIGKG…AEELLLDSFL (258 aa)) is the Protein kinase domain. Residues 108 to 111 (TELF) and Lys-158 each bind ATP. Asp-175 acts as the Proton acceptor in catalysis. Positions 451–477 (QNQSSKDNHQNGASSQAGESISHSLSS) are enriched in polar residues. The segment at 451–517 (QNQSSKDNHQ…EEEEDERLKE (67 aa)) is disordered. Ser-505 carries the post-translational modification Phosphoserine.

This sequence belongs to the protein kinase superfamily. Ser/Thr protein kinase family. WNK subfamily.

The catalysed reaction is L-seryl-[protein] + ATP = O-phospho-L-seryl-[protein] + ADP + H(+). It catalyses the reaction L-threonyl-[protein] + ATP = O-phospho-L-threonyl-[protein] + ADP + H(+). Functionally, may regulate flowering time by modulating the photoperiod pathway. The polypeptide is Probable serine/threonine-protein kinase WNK7 (WNK7) (Arabidopsis thaliana (Mouse-ear cress)).